The primary structure comprises 147 residues: Myoglobin (147 aa).

The 140-residue stretch at 2–141 (HDAELVLKCW…VIGDIDTYYK (140 aa)) folds into the Globin domain. H60 provides a ligand contact to nitrite. An O2-binding site is contributed by H60. Residue H89 coordinates heme b.

The protein belongs to the globin family. Monomeric.

Its subcellular location is the cytoplasm. It is found in the sarcoplasm. It catalyses the reaction Fe(III)-heme b-[protein] + nitric oxide + H2O = Fe(II)-heme b-[protein] + nitrite + 2 H(+). The enzyme catalyses H2O2 + AH2 = A + 2 H2O. Monomeric heme protein which primary function is to store oxygen and facilitate its diffusion within muscle tissues. Reversibly binds oxygen through a pentacoordinated heme iron and enables its timely and efficient release as needed during periods of heightened demand. Depending on the oxidative conditions of tissues and cells, and in addition to its ability to bind oxygen, it also has a nitrite reductase activity whereby it regulates the production of bioactive nitric oxide. Under stress conditions, like hypoxia and anoxia, it also protects cells against reactive oxygen species thanks to its pseudoperoxidase activity. In Cyprinus carpio (Common carp), this protein is Myoglobin (mb).